The chain runs to 46 residues: MGFFNKDKGKRSEKEKNVIQGALEDAGSALKDDPLQEAVQKKKNNR.

Residues 24-46 (EDAGSALKDDPLQEAVQKKKNNR) are disordered.

The protein resides in the spore core. The chain is Small, acid-soluble spore protein J (sspJ) from Bacillus subtilis (strain 168).